Here is a 391-residue protein sequence, read N- to C-terminus: MDPRRNFQPGGYDSRNTFTSGSFGPPDFGESDEAELVSVSWNQDYSCFAAGTSHGFRIYNCEPFKETFRRELKDGGFKIVEMLFRSNILALVGGGPNSQYPSNKVLIWDDHQGRCISEFTFRSEIRAVKLRRDRIVVVLEHKIYVYNFMDLRLLHQIENMANPRGLCCLSHHMNTSVLACPGIRRGEVRVEHFGLNMVQIINAHDSNIACMTLTLDGLLLATASTKGTLIRIFNTMDGTRLQEVRRGVDRADIYSIALSPNVQWLAVSSDKGTVHIFSLRVRVIGEDAYSTEHETSSNSLQPLVSPASGANPGSSLSFLRGVLPKYFSSEWSFSQFHVPEVTQYFAAFGAQNTIAIIGLDGSFYRCNFDPVNGGEMTQLEHFHFLKQDSPR.

The tract at residues 1–24 (MDPRRNFQPGGYDSRNTFTSGSFG) is disordered. 4 WD repeats span residues 31 to 69 (SDEA…ETFR), 74 to 118 (DGGF…CISE), 203 to 243 (AHDS…RLQE), and 248 to 287 (VDRA…IGED).

The protein belongs to the WD repeat PROPPIN family. As to quaternary structure, component of the PI(3,5)P2 regulatory complex at least composed of ATG18, SAC/FIG4, FAB1 and VAC14. In terms of tissue distribution, expressed in roots, stems, flowers and leaves.

It localises to the preautophagosomal structure membrane. Its subcellular location is the vacuole membrane. Functionally, the PI(3,5)P2 regulatory complex regulates both the synthesis and turnover of phosphatidylinositol 3,5-bisphosphate (PtdIns(3,5)P2). Required for autophagy. In Arabidopsis thaliana (Mouse-ear cress), this protein is Autophagy-related protein 18d (ATG18D).